A 463-amino-acid chain; its full sequence is Sodium-coupled neutral amino acid transporter 7 (463 aa).

At serine 28 the chain carries Phosphoserine. Transmembrane regions (helical) follow at residues 56 to 76 (AVFI…PAAF), 82 to 102 (VAAG…GLVI), 130 to 150 (LCEV…LIII), 179 to 199 (FTIS…KEIG), 206 to 226 (FLSV…YIWP), 240 to 260 (ASWM…QCHV), 283 to 303 (AAMV…FLTF), 320 to 340 (VAVA…YPIL), 372 to 392 (VLQT…IPDI), 396 to 416 (ISVI…LCLI), and 429 to 449 (ASWW…AFIF).

It belongs to the amino acid/polyamine transporter 2 family. As to quaternary structure, interacts with the mTORC1 complex; this interaction mediates the recruitment of mTORC1 to the lysosome and its subsequent activation. Highly expressed in the brain, including the hippocampus, especially in the granular layer of dentate gyrus cells and the pyramidal cell layer of the hippocampus, amygdala, thalamus, hypothalamus, in the layer of Purkinje cells in the cerebellum and the layers of cortex. Particularly strong expression in neurons of the ventromedial hypothalamus, basolateral amygdala, ventral tegmental area, and locus coeruleus. Not detected in glial cells, including astrocytes. In addition to brain, also expressed in the spinal cord (at protein level).

The protein resides in the lysosome membrane. The protein localises to the cell projection. Its subcellular location is the axon. It catalyses the reaction L-glutamine(in) + Na(+)(in) = L-glutamine(out) + Na(+)(out). The enzyme catalyses L-asparagine(in) + Na(+)(in) = L-asparagine(out) + Na(+)(out). Functionally, symporter that selectively cotransports sodium ions and amino acids, such as L-glutamine and L-asparagine from the lysosome into the cytoplasm and may participates in mTORC1 activation. The transport activity requires an acidic lysosomal lumen. The chain is Sodium-coupled neutral amino acid transporter 7 from Mus musculus (Mouse).